A 416-amino-acid polypeptide reads, in one-letter code: NADH-quinone oxidoreductase subunit H (416 aa).

9 helical membrane-spanning segments follow: residues 16–36 (LILA…LAAI), 84–104 (PVYL…FAVI), 124–144 (LAVA…GIVL), 165–185 (VVSY…YAGT), 197–217 (STWY…SMVG), 260–280 (VSAL…PISL), 288–308 (WWPL…YIWL), 320–340 (FMAI…MIVA), and 353–373 (WASG…VVLW).

This sequence belongs to the complex I subunit 1 family. In terms of assembly, NDH-1 is composed of 14 different subunits. Subunits NuoA, H, J, K, L, M, N constitute the membrane sector of the complex.

Its subcellular location is the cell membrane. The enzyme catalyses a quinone + NADH + 5 H(+)(in) = a quinol + NAD(+) + 4 H(+)(out). NDH-1 shuttles electrons from NADH, via FMN and iron-sulfur (Fe-S) centers, to quinones in the respiratory chain. The immediate electron acceptor for the enzyme in this species is believed to be menaquinone. Couples the redox reaction to proton translocation (for every two electrons transferred, four hydrogen ions are translocated across the cytoplasmic membrane), and thus conserves the redox energy in a proton gradient. This subunit may bind ubiquinone. The sequence is that of NADH-quinone oxidoreductase subunit H from Mycobacterium sp. (strain JLS).